The chain runs to 184 residues: Dual-action ribosomal maturation protein DarP (184 aa).

Residues 1–27 are disordered; the sequence is MSIPDTEIPVDDDGYDENGYDRPSKSQ. Over residues 8 to 18 the composition is skewed to acidic residues; sequence IPVDDDGYDEN.

Belongs to the DarP family.

It is found in the cytoplasm. Functionally, member of a network of 50S ribosomal subunit biogenesis factors which assembles along the 30S-50S interface, preventing incorrect 23S rRNA structures from forming. Promotes peptidyl transferase center (PTC) maturation. The sequence is that of Dual-action ribosomal maturation protein DarP from Bordetella avium (strain 197N).